The primary structure comprises 251 residues: 3-deoxy-manno-octulosonate cytidylyltransferase (251 aa).

It belongs to the KdsB family.

Its subcellular location is the cytoplasm. The catalysed reaction is 3-deoxy-alpha-D-manno-oct-2-ulosonate + CTP = CMP-3-deoxy-beta-D-manno-octulosonate + diphosphate. Its pathway is nucleotide-sugar biosynthesis; CMP-3-deoxy-D-manno-octulosonate biosynthesis; CMP-3-deoxy-D-manno-octulosonate from 3-deoxy-D-manno-octulosonate and CTP: step 1/1. It participates in bacterial outer membrane biogenesis; lipopolysaccharide biosynthesis. Functionally, activates KDO (a required 8-carbon sugar) for incorporation into bacterial lipopolysaccharide in Gram-negative bacteria. This is 3-deoxy-manno-octulosonate cytidylyltransferase from Geotalea uraniireducens (strain Rf4) (Geobacter uraniireducens).